A 198-amino-acid chain; its full sequence is Imidazoleglycerol-phosphate dehydratase (198 aa).

Belongs to the imidazoleglycerol-phosphate dehydratase family.

It is found in the cytoplasm. The catalysed reaction is D-erythro-1-(imidazol-4-yl)glycerol 3-phosphate = 3-(imidazol-4-yl)-2-oxopropyl phosphate + H2O. It functions in the pathway amino-acid biosynthesis; L-histidine biosynthesis; L-histidine from 5-phospho-alpha-D-ribose 1-diphosphate: step 6/9. The protein is Imidazoleglycerol-phosphate dehydratase of Agrobacterium fabrum (strain C58 / ATCC 33970) (Agrobacterium tumefaciens (strain C58)).